The chain runs to 134 residues: ATP synthase epsilon chain, chloroplastic (134 aa).

Belongs to the ATPase epsilon chain family. F-type ATPases have 2 components, CF(1) - the catalytic core - and CF(0) - the membrane proton channel. CF(1) has five subunits: alpha(3), beta(3), gamma(1), delta(1), epsilon(1). CF(0) has three main subunits: a, b and c.

Its subcellular location is the plastid. It is found in the chloroplast thylakoid membrane. In terms of biological role, produces ATP from ADP in the presence of a proton gradient across the membrane. In Nymphaea alba (White water-lily), this protein is ATP synthase epsilon chain, chloroplastic.